The primary structure comprises 197 residues: Adenylyl-sulfate kinase (197 aa).

An ATP-binding site is contributed by G33–S40. S107 functions as the Phosphoserine intermediate in the catalytic mechanism.

It belongs to the APS kinase family.

The catalysed reaction is adenosine 5'-phosphosulfate + ATP = 3'-phosphoadenylyl sulfate + ADP + H(+). It functions in the pathway sulfur metabolism; hydrogen sulfide biosynthesis; sulfite from sulfate: step 2/3. Catalyzes the synthesis of activated sulfate. The protein is Adenylyl-sulfate kinase of Bacillus velezensis (strain DSM 23117 / BGSC 10A6 / LMG 26770 / FZB42) (Bacillus amyloliquefaciens subsp. plantarum).